The chain runs to 315 residues: AT-hook motif nuclear-localized protein 19 (315 aa).

Positions 1 to 25 are enriched in polar residues; that stretch reads MANPWWTGQVNLSGLETTPPGSSQL. Disordered regions lie at residues 1-104 and 239-285; these read MANP…RDSP and EEEA…YNMP. Basic and acidic residues predominate over residues 61 to 74; it reads DNLSGDDHEPREGA. Residues 80 to 92 constitute a DNA-binding region (a.T hook); it reads RRPRGRPAGSKNK. In terms of domain architecture, PPC spans 104–248; the sequence is PNALKSHVME…EEEAAERGGG (145 aa). The span at 245–276 shows a compositional bias: gly residues; sequence RGGGGGSGGVVPGQLGGGGSPLSSGAGGGDGN.

Slightly expressed in roots.

Its subcellular location is the nucleus. Its function is as follows. Transcription factor that specifically binds AT-rich DNA sequences related to the nuclear matrix attachment regions (MARs). Negatively regulates plant innate immunity (PTI) to pathogens through the down-regulation of the PAMP-triggered FRK1 expression. Positively regulates defense against fungal Verticillium infection. The chain is AT-hook motif nuclear-localized protein 19 from Arabidopsis thaliana (Mouse-ear cress).